The following is a 264-amino-acid chain: Undecaprenyl-diphosphatase (264 aa).

8 helical membrane-spanning segments follow: residues 1–21 (MTVFQALVLGIIQGLGEFLPI), 40–60 (GLTFDVALHLGTLISIAAFFW), 81–101 (MFWYLVLATVPGAVMGYLLEE), 109–129 (TPLLIGIMLIVMGIFLYWADA), 140–160 (ISMADSLLIGLSQAFAIIPGV), 183–203 (FSFLLSTPIIVGAGLFKLKDI), 211–231 (AFITGVASSALVGFISISFLL), and 239–259 (FALFVWYRLVAGLAVIVLAAA).

It belongs to the UppP family.

Its subcellular location is the cell membrane. It catalyses the reaction di-trans,octa-cis-undecaprenyl diphosphate + H2O = di-trans,octa-cis-undecaprenyl phosphate + phosphate + H(+). In terms of biological role, catalyzes the dephosphorylation of undecaprenyl diphosphate (UPP). Confers resistance to bacitracin. This is Undecaprenyl-diphosphatase from Pelotomaculum thermopropionicum (strain DSM 13744 / JCM 10971 / SI).